A 70-amino-acid chain; its full sequence is Protein SlyX homolog (70 aa).

Belongs to the SlyX family.

This chain is Protein SlyX homolog, found in Pseudoalteromonas atlantica (strain T6c / ATCC BAA-1087).